Here is a 319-residue protein sequence, read N- to C-terminus: Ankyrin repeat domain-containing protein 1 (319 aa).

Positions 46–65 are disordered; the sequence is KTLPANSVKQGEEQRKSEKL. Positions 53–89 form a coiled coil; the sequence is VKQGEEQRKSEKLREAELKKKKLEQRSKLENLEDLEI. Basic and acidic residues predominate over residues 55–65; sequence QGEEQRKSEKL. ANK repeat units lie at residues 152-181, 185-214, 218-247, 251-280, and 284-315; these read YKRTALHRACLEGHLAIVEKLMEAGAQIEF, LESTAIHWACRGGNADVLKLLLNKGAKISA, LLSTALHVAVRTGHYECAEHLIACEADLNA, EGDTPLHDAVRLNRYKMIRLLMTFGADLKV, and AGKTPMDLVLHWQSGTKAIFDSLKENAYKNSR.

As to quaternary structure, interacts with TTN/titin and YBX1. As to expression, expressed in heart, cardiac muscle.

Its subcellular location is the nucleus. May play an important role in endothelial cell activation. May act as a nuclear transcription factor that negatively regulates the expression of cardiac genes. The polypeptide is Ankyrin repeat domain-containing protein 1 (Ankrd1) (Mus musculus (Mouse)).